The following is a 591-amino-acid chain: Pentatricopeptide repeat-containing protein At3g47530 (591 aa).

PPR repeat units follow at residues 76-110 (TLSH…SSLP), 112-146 (NPLS…GFLS), 147-177 (DSLL…IPKR), 178-208 (DTVS…MKND), 216-250 (DGVT…GLSG), 251-281 (ALNL…MRER), 282-316 (NVVS…GISP), 317-351 (EEQT…EFKI), and 354-384 (NLHH…MEMK). Residues 389 to 464 (IWRTLLGACR…KPGCSAIELQ (76 aa)) are type E motif. The type E(+) motif stretch occupies residues 465–495 (GTVHEFIVDDVSHPRKEEIYKMLAEINQQLK). A type DYW motif region spans residues 496-591 (IAGYVAEITS…GGSCSCNDFW (96 aa)).

This sequence belongs to the PPR family. PCMP-H subfamily.

The chain is Pentatricopeptide repeat-containing protein At3g47530 (PCMP-H76) from Arabidopsis thaliana (Mouse-ear cress).